The following is a 498-amino-acid chain: Protein flp (498 aa).

The next 4 helical transmembrane spans lie at 6-26 (LYFL…IHIT), 389-409 (FNIV…FSAY), 433-453 (LTLC…YLIL), and 471-491 (LALI…LLFL).

It is found in the cell membrane. Its function is as follows. Its precise function is unknown. Has no penicillin-binding activity and is not involved in methicillin resistance. In Staphylococcus aureus (strain MW2), this protein is Protein flp (flp).